We begin with the raw amino-acid sequence, 117 residues long: cAMP-regulated phosphoprotein 19-B (117 aa).

Basic and acidic residues predominate over residues 1–37 (MSRDNQEIKAPEESSAEEQKEMDDKVTSPEKAEEIKL). The interval 1 to 54 (MSRDNQEIKAPEESSAEEQKEMDDKVTSPEKAEEIKLKSRYPNIGPKPGGSDFL) is disordered. Ser28 carries the post-translational modification Phosphoserine; by CDK2. The residue at position 67 (Ser67) is a Phosphoserine; by GWL. The disordered stretch occupies residues 77–117 (MKNKQLPTAAPDKTEVTGDHIPTPQDLPQRKPSLVASKLAG). Position 99 is a phosphothreonine; by CDK2 (Thr99). Ser109 carries the phosphoserine; by PKA modification.

This sequence belongs to the endosulfine family. As to quaternary structure, interacts (when phosphorylated at Ser-67) with ppp2r2d. In terms of processing, phosphorylation at Ser-67 by gwl during mitosis is essential for interaction with ppp2r2d (PR55-delta) and subsequent inactivation of PP2A.

It is found in the cytoplasm. In terms of biological role, protein phosphatase inhibitor that specifically inhibits protein phosphatase 2A (PP2A) during mitosis. When phosphorylated at Ser-67 during mitosis, specifically interacts with ppp2r2d (PR55-delta) and inhibits its activity, leading to inactivation of PP2A, an essential condition to keep cyclin-B1-CDK1 activity high during M phase. The sequence is that of cAMP-regulated phosphoprotein 19-B (arpp19-b) from Xenopus laevis (African clawed frog).